A 327-amino-acid chain; its full sequence is MPHLAELVAKAKAAVEDAQDIAALDLVRVEYLGKKGHLTLQMTSLRELPAEERPAAGAVINQAKQEVQEALNARKEKLESAVLNARLAAETIDVSLPGRRMENGGLHPVTRTIERIETFFGELGFSVESGPEIEDDYHNFDALNIPAHHPARADHDTFWFDATRLLRTQTSGVQIRTMQEQQPPIRIIVPGRVYRNDYDQTHTPMFHQMEGLIVDRDISFTNLKGTLHDFLRNFFEEDLQIRFRPSYFPFTEPSAEVDVMGKNGKWLEVLGCGMVHPNVLRNVGIDPEIYSGFAFGMGMERLTMLRYGVTDLRAFFENDLRFLKQFK.

E252 lines the Mg(2+) pocket.

It belongs to the class-II aminoacyl-tRNA synthetase family. Phe-tRNA synthetase alpha subunit type 1 subfamily. Tetramer of two alpha and two beta subunits. Mg(2+) serves as cofactor.

It is found in the cytoplasm. It catalyses the reaction tRNA(Phe) + L-phenylalanine + ATP = L-phenylalanyl-tRNA(Phe) + AMP + diphosphate + H(+). This Yersinia pseudotuberculosis serotype O:1b (strain IP 31758) protein is Phenylalanine--tRNA ligase alpha subunit.